Consider the following 583-residue polypeptide: Inactive tyrosine-protein kinase RYK (583 aa).

The first 18 residues, 1 to 18 (MILRYLIFFAQLWALCLA), serve as a signal peptide directing secretion. The Extracellular segment spans residues 19 to 173 (NVNMFISKEE…EVDDTDSIDK (155 aa)). The region spanning 22-147 (MFISKEEMNR…KVKLRQEKIC (126 aa)) is the WIF domain. Residues N30 and N46 are each glycosylated (N-linked (GlcNAc...) asparagine). A disulfide bond links C113 and C147. Residues 174 to 194 (AFFVIICIAAAFLLIVAATLI) traverse the membrane as a helical segment. Over 195–583 (CYFKRSKKED…DFNIQLSQYI (389 aa)) the chain is Cytoplasmic. Residues 281-583 (FQSLPLDMEG…DFNIQLSQYI (303 aa)) form the Protein kinase domain. ATP-binding positions include 287–295 (DMEGTFGEV) and K327.

The protein belongs to the protein kinase superfamily. Tyr protein kinase family.

The protein resides in the cell membrane. The protein localises to the basolateral cell membrane. In terms of biological role, has no detectable kinase activity in vitro and is unlikely to function as a tyrosine kinase in vivo. Receptor which may act as a receptor for Wnt ligand mom-2. Plays a role in controlling P7.p vulva precursor cell lineage orientation during vulva development. Regulates pop-1 asymmetric distribution in P7.p and its daughter cells. Plays a role in the migration of ALM neurons during embryogenesis. This is Inactive tyrosine-protein kinase RYK from Caenorhabditis elegans.